Reading from the N-terminus, the 201-residue chain is dITP/XTP pyrophosphatase (201 aa).

Residue 9–14 (SNNAGK) participates in substrate binding. 2 residues coordinate Mg(2+): Glu-41 and Asp-70. Asp-70 functions as the Proton acceptor in the catalytic mechanism. Substrate is bound by residues Ser-71, 155–158 (FGYD), Lys-178, and 183–184 (HR).

Belongs to the HAM1 NTPase family. As to quaternary structure, homodimer. Requires Mg(2+) as cofactor.

The enzyme catalyses XTP + H2O = XMP + diphosphate + H(+). The catalysed reaction is dITP + H2O = dIMP + diphosphate + H(+). It carries out the reaction ITP + H2O = IMP + diphosphate + H(+). Functionally, pyrophosphatase that catalyzes the hydrolysis of nucleoside triphosphates to their monophosphate derivatives, with a high preference for the non-canonical purine nucleotides XTP (xanthosine triphosphate), dITP (deoxyinosine triphosphate) and ITP. Seems to function as a house-cleaning enzyme that removes non-canonical purine nucleotides from the nucleotide pool, thus preventing their incorporation into DNA/RNA and avoiding chromosomal lesions. The sequence is that of dITP/XTP pyrophosphatase from Methylococcus capsulatus (strain ATCC 33009 / NCIMB 11132 / Bath).